A 768-amino-acid chain; its full sequence is Degenerin mec-4 (768 aa).

The Cytoplasmic portion of the chain corresponds to 1-109 (MSWMQNLKNY…GEAPNVYYRA (109 aa)). The chain crosses the membrane as a helical span at residues 110–130 (VWVMLFLGCMIMLYLNAQSVL). Residues 131–718 (DKYNRNEKIV…VNLLADFGGQ (588 aa)) are Extracellular-facing. Disordered regions lie at residues 187–221 (AGGN…GKRD) and 237–260 (GSQG…ETTT). Residues 189 to 200 (GNKEHDGEKEVI) show a composition bias toward basic and acidic residues. A compositionally biased stretch (low complexity) spans 203–212 (APTTPAPTTK). Acidic residues predominate over residues 243 to 252 (EQEDKDDEKE). Residues Asn-336, Asn-357, Asn-480, Asn-484, Asn-503, and Asn-671 are each glycosylated (N-linked (GlcNAc...) asparagine). A helical membrane pass occupies residues 719-739 (LGLWCGISFLTCCEFVFLFLE). Residues 740-768 (TAYMSAEHNYSLYKKKKAEKAKKVASGSF) lie on the Cytoplasmic side of the membrane.

This sequence belongs to the amiloride-sensitive sodium channel (TC 1.A.6) family. The channel is probably composed of at least the mec-2, mec-4, mec-6 and mec-10 subunits.

The protein localises to the membrane. Functionally, probable sodium channel subunit. May be needed for mechanosensory transduction (touch sensitivity). Negatively regulates the turning step of male mating behavior. This Caenorhabditis briggsae protein is Degenerin mec-4 (mec-4).